The primary structure comprises 918 residues: Isoleucine--tRNA ligase 1 (918 aa).

The 'HIGH' region signature appears at 57–67 (PYANGDIHIGH). An L-isoleucyl-5'-AMP-binding site is contributed by E553. Residues 594–598 (KMSKS) carry the 'KMSKS' region motif. Residue K597 coordinates ATP. Residues C885, C888, C905, and C908 each coordinate Zn(2+).

Belongs to the class-I aminoacyl-tRNA synthetase family. IleS type 1 subfamily. Monomer. Requires Zn(2+) as cofactor.

It localises to the cytoplasm. The catalysed reaction is tRNA(Ile) + L-isoleucine + ATP = L-isoleucyl-tRNA(Ile) + AMP + diphosphate. Its function is as follows. Catalyzes the attachment of isoleucine to tRNA(Ile). As IleRS can inadvertently accommodate and process structurally similar amino acids such as valine, to avoid such errors it has two additional distinct tRNA(Ile)-dependent editing activities. One activity is designated as 'pretransfer' editing and involves the hydrolysis of activated Val-AMP. The other activity is designated 'posttransfer' editing and involves deacylation of mischarged Val-tRNA(Ile). The protein is Isoleucine--tRNA ligase 1 of Oceanobacillus iheyensis (strain DSM 14371 / CIP 107618 / JCM 11309 / KCTC 3954 / HTE831).